Reading from the N-terminus, the 4545-residue chain is Prolow-density lipoprotein receptor-related protein 1 (4545 aa).

The N-terminal stretch at 1–19 (MLTPPLLLLLPLLSALVAG) is a signal peptide. The Extracellular portion of the chain corresponds to 20–4424 (ATMDAPKTCS…SQQQPGHMTS (4405 aa)). 2 consecutive LDL-receptor class A domains span residues 27–66 (TCSPKQFACRDQITCISKGWRCDGERDCPDGSDEAPEICP) and 72–110 (RCPPNEHSCLGTELCVPMSRLCNGIQDCMDGSDEGAHCR). Disulfide bonds link C28/C41, C35/C54, C48/C65, C73/C86, C80/C99, and C93/C109. Residues N115, N137, N186, N240, and N275 are each glycosylated (N-linked (GlcNAc...) asparagine). LDL-receptor class B repeat units lie at residues 293–335 (GNFY…DPAM), 336–379 (GKVF…DLVS), and 380–423 (RLVY…FENY). A glycan (N-linked (GlcNAc...) asparagine) is linked at N358. A glycan (N-linked (GlcNAc...) asparagine) is linked at N447. LDL-receptor class B repeat units lie at residues 572 to 614 (GFIY…DWMG), 615 to 660 (DNLY…DPLN), 661 to 711 (GWMY…DIPA), and 712 to 755 (GRLY…HGNY). One copy of the HAT 1 repeat lies at 639 to 671 (TRKTLIEGKMTHPRAIVVDPLNGWMYWTDWEED). N730 is a glycosylation site (N-linked (GlcNAc...) asparagine). LDL-receptor class A domains lie at 854–892 (QCQPGEFACANNRCIQERWKCDGDNDCLDNSDEAPALCH), 895–933 (TCPSDRFKCENNRCIPNRWLCDGDNDCGNSEDESNATCS), 936–973 (TCPPNQFSCASGRCIPISWTCDLDDDCGDRSDESASCA), 976–1013 (TCFPLTQFTCNNGRCININWRCDNDNDCGDNSDEAGCS), 1015–1053 (SCSSTQFKCNSGRCIPEHWTCDGDNDCGDYSDETHANCT), 1062–1099 (GCHSDEFQCRLDGLCIPLRWRCDGDTDCMDSSDEKGCE), 1104–1142 (VCDPNVKFGCKDSARCISKAWVCDGDSDCEDNSDEENCE), and 1145–1184 (ACRPPSHPCANNTSVCLSPDKLCDGKDDCGDGSDEGELCD). Intrachain disulfides connect C855–C867, C862–C880, C874–C891, C896–C908, C903–C921, C915–C932, C937–C949, C944–C962, C956–C972, C977–C990, C985–C1003, C997–C1012, C1016–C1028, C1023–C1041, C1035–C1052, C1063–C1076, C1070–C1089, C1083–C1098, C1105–C1119, C1113–C1132, C1126–C1141, C1146–C1160, C1153–C1173, and C1167–C1183. Residues W872, D875, D877, D879, D885, and E886 each contribute to the Ca(2+) site. A glycan (N-linked (GlcNAc...) asparagine) is linked at N929. Ca(2+)-binding residues include W1033, D1036, D1038, D1040, D1046, and E1047. N-linked (GlcNAc...) asparagine glycosylation occurs at N1051. 6 residues coordinate Ca(2+): W1081, D1084, D1086, D1088, D1094, and E1095. The N-linked (GlcNAc...) asparagine glycan is linked to N1156. N-linked (GlcNAc...) asparagine glycosylation is found at N1196 and N1219. LDL-receptor class B repeat units follow at residues 1310–1356 (SALY…DWIA), 1357–1399 (GNIY…DPRD), 1400–1446 (GILF…DYLE), 1447–1491 (KRIL…YGGE), and 1492–1532 (VYWT…YHPS). HAT repeat units follow at residues 1380 to 1413 (TTLLAGDIEHPRAIALDPRDGILFWTDWDASLPR) and 1470 to 1503 (MEVLRGHEFLSHPFAVTLYGGEVYWTDWRTNTLA). Residues N1512, N1559, N1576, N1617, and N1646 are each glycosylated (N-linked (GlcNAc...) asparagine). LDL-receptor class B repeat units follow at residues 1628–1670 (QRVY…DWVS), 1671–1714 (RNLF…HPLR), 1715–1754 (GKLYWTDGDNISMVNMDGSNRTLLFSGQKGPVGLAIDFPE), and 1755–1799 (SKLY…MGDK). Residues 1653 to 1684 (VVSADLPNAHGLAVDWVSRNLFWTSYDTNKKQ) form an HAT 4 repeat. 5 N-linked (GlcNAc...) asparagine glycosylation sites follow: N1724, N1734, N1764, N1826, and N1934. LDL-receptor class B repeat units lie at residues 1935–1977 (DTIY…DWIA), 1978–2020 (GNIY…HPEK), 2021–2064 (GYLF…DYQG), and 2065–2108 (GKLY…FEDF). N-linked (GlcNAc...) asparagine glycosylation is present at N1996. Residue K2010 is modified to N6-acetyllysine. N2049 is a glycosylation site (N-linked (GlcNAc...) asparagine). Residues N2118 and N2128 are each glycosylated (N-linked (GlcNAc...) asparagine). 5 LDL-receptor class B repeats span residues 2254-2295 (NRIF…HRGW), 2296-2344 (DTLY…DECQ), 2345-2389 (NLMF…DHRA), 2390-2432 (EKLY…YGEH), and 2433-2474 (IFWT…VAND). HAT repeat units lie at residues 2277–2309 (TTIVENVGSVEGLAYHRGWDTLYWTSYTTSTIT), 2325–2358 (TVITMSGDDHPRAFVLDECQNLMFWTNWNELHPS), and 2411–2444 (HRYVILKSEPVHPFGLAVYGEHIFWTDWVRRAVQ). N-linked (GlcNAc...) asparagine glycosylation is found at N2473, N2503, and N2522. 7 LDL-receptor class A domains span residues 2524–2563 (SCRAQDEFECANGECISFSLTCDGVSHCKDKSDEKPSYCN), 2566–2602 (RCKKTFRQCNNGRCVSNMLWCNGVDDCGDGSDEIPCN), 2605–2641 (ACGVGEFRCRDGSCIGNSSRCNQFVDCEDASDEMNCS), 2639–2690 (NCSA…RDCP), 2696–2732 (RCPLNYFACPSGRCIPMSWTCDKEDDCENGEDETHCN), 2734–2771 (FCSEAQFECQNHRCISKQWLCDGSDDCGDGSDEAAHCE), and 2774–2814 (TCGP…AGCL). Cystine bridges form between C2525/C2538, C2533/C2551, C2545/C2562, C2567/C2579, C2574/C2592, and C2586/C2601. N2602 is a glycosylation site (N-linked (GlcNAc...) asparagine). Cystine bridges form between C2606–C2618, C2613–C2631, C2625–C2640, C2640–C2667, C2645–C2680, C2674–C2689, C2697–C2709, C2704–C2722, C2716–C2731, C2735–C2747, C2742–C2760, C2754–C2770, C2775–C2788, C2782–C2801, and C2795–C2813. N-linked (GlcNAc...) asparagine glycans are attached at residues N2621 and N2639. A glycan (N-linked (GlcNAc...) asparagine) is linked at N2816. LDL-receptor class A domains follow at residues 2818-2855 (TCDDREFMCQNRLCIPKHFVCDHDRDCADGSDESPECE), 2858-2899 (TCGP…PHCT), and 2904-2941 (KCNASSQFLCSSGRCVAEALLCNGQDDCGDGSDERGCH). Disulfide bonds link C2819-C2831, C2826-C2844, C2838-C2854, C2859-C2871, C2866-C2885, C2879-C2898, C2905-C2918, C2913-C2931, C2925-C2940, C2987-C2997, and C2993-C3006. A glycan (N-linked (GlcNAc...) asparagine) is linked at N2906. In terms of domain architecture, EGF-like 1; calcium-binding spans 2983 to 3018 (DVDECSTTFPCSQLCINTHGSYKCLCVEGYAPRGGD). N-linked (GlcNAc...) asparagine glycosylation is found at N3049 and N3090. LDL-receptor class B repeat units follow at residues 3070–3114 (QMIY…DWVG), 3115–3157 (GNLY…DVQN), 3158–3201 (GYLY…DYVT), 3202–3244 (ERIY…FEDY), and 3245–3285 (VYWT…FHAL). HAT repeat units follow at residues 3128 to 3171 (EVSK…HSLI) and 3224 to 3256 (RHVVLSQDIPHIFALTLFEDYVYWTDWETKSIN). N-linked (GlcNAc...) asparagine glycans are attached at residues N3265 and N3334. 11 LDL-receptor class A domains span residues 3334 to 3371 (NCTASQFVCKNDKCIPFWWKCDTEDDCGDHSDEPPDCP), 3374 to 3410 (KCRPGQFQCSTGICTNPAFICDGDNDCQDNSDEANCD), 3413 to 3450 (VCLPSQFKCTNTNRCIPGIFRCNGQDNCGDGEDERDCP), 3453 to 3491 (TCAPNQFQCSITKRCIPRVWVCDRDNDCVDGSDEPANCT), 3494 to 3533 (TCGVDEFRCKDSGRCIPARWKCDGEDDCGDGSDEPKEECD), 3536 to 3572 (TCEPYQFRCKNNRCVPGRWQCDYDNDCGDNSDEESCT), 3575 to 3611 (PCSESEFSCANGRCIAGRWKCDGDHDCADGSDEKDCT), 3613 to 3649 (RCDMDQFQCKSGHCIPLRWRCDADADCMDGSDEEACG), 3654 to 3692 (TCPLDEFQCNNTLCKPLAWKCDGEDDCGDNSDENPEECT), 3695 to 3733 (QCPPNRPFRCKNDRVCLWIGRQCDGTDNCGDGTDEEDCE), and 3741 to 3778 (HCKDKKEFLCRNQRCLSSSLRCNMFDDCGDGSDEEDCS). Disulfide bonds link C3335–C3347, C3342–C3360, C3354–C3370, C3375–C3387, C3382–C3400, C3394–C3409, C3414–C3427, C3421–C3440, C3434–C3449, C3454–C3467, C3461–C3480, C3474–C3490, C3495–C3508, C3502–C3521, C3515–C3532, C3537–C3549, C3544–C3562, C3556–C3571, C3576–C3588, C3583–C3601, C3595–C3610, C3614–C3626, C3621–C3639, C3633–C3648, C3655–C3667, C3662–C3680, C3674–C3691, C3696–C3710, C3704–C3723, C3717–C3732, C3742–C3755, C3750–C3768, and C3762–C3777. N3489 carries N-linked (GlcNAc...) asparagine glycosylation. Residue N3663 is glycosylated (N-linked (GlcNAc...) asparagine). 2 N-linked (GlcNAc...) asparagine glycosylation sites follow: N3789 and N3840. An LDL-receptor class B 31 repeat occupies 3913 to 3925 (GRVYWTNWHTGTI). A glycan (N-linked (GlcNAc...) asparagine) is linked at N3954. LDL-receptor class B repeat units lie at residues 3971–4013 (GNVY…DPLR), 4014–4057 (GTMY…DYHN), and 4058–4102 (ERLY…FEDY). The HAT 10 repeat unit spans residues 3995 to 4027 (TLISGMIDEPHAIVVDPLRGTMYWSDWGNHPKI). Residues N4076, N4126, and N4180 are each glycosylated (N-linked (GlcNAc...) asparagine). EGF-like domains follow at residues 4197-4230 (RPGTCTLQCFNGGSCFLNARRQPKCRCQPRYTGD), 4233-4269 (ELDQCWEYCHNGGTCAASPSGMPTCRCPTGFTGPRCT), 4270-4302 (QQVCAGYCANNSTCTVNQGNQPQCRCLPGFLGD), and 4305-4341 (QYRQCSGFCENFGTCQMAADGSRQCRCTVYFEGTRCE). 10 disulfide bridges follow: C4201/C4211, C4205/C4221, C4237/C4247, C4241/C4257, C4259/C4268, C4273/C4283, C4277/C4293, C4309/C4319, C4313/C4329, and C4331/C4340. N4280 carries an N-linked (GlcNAc...) asparagine glycan. N-linked (GlcNAc...) asparagine glycosylation occurs at N4365. The region spanning 4376–4410 (LTCIDHCSNGGSCTMNSKMMPECQCPPHMTGPRCE) is the EGF-like 6 domain. 3 disulfide bridges follow: C4378/C4388, C4382/C4398, and C4400/C4409. Residues 4425–4445 (ILIPLLLLLLLLLVAGVVFWY) form a helical membrane-spanning segment. Topologically, residues 4446–4545 (KRRVRGAKGF…PEDEIGDPLA (100 aa)) are cytoplasmic. The interval 4446 to 4545 (KRRVRGAKGF…PEDEIGDPLA (100 aa)) is interaction with MAFB. Position 4461 is a phosphothreonine (T4461). Y4508 carries the post-translational modification Phosphotyrosine. S4518, S4521, and S4524 each carry phosphoserine.

The protein belongs to the LDLR family. Heterodimer of an 85-kDa membrane-bound carboxyl subunit and a non-covalently attached 515-kDa N-terminal subunit. Intracellular domain interacts with MAFB. Found in a complex with PID1/PCLI1, LRP1 and CUBNI. Interacts with SNX17, PID1/PCLI1, PDGF and CUBN. The intracellular domain interacts with SHC1, GULP1 and DAB1. Can weakly interact (via NPXY motif) with DAB2 (via PID domain); the interaction is enhanced by tyrosine phosphorylation of the NPXY motif. Interacts with MDK; promotes neuronal survival. Interacts with LRPAP1; this interaction is followed by rapid internalization. Interacts with uPA/PLAU and PAI1/SERPINE1, either individually or in complex with each other, leading to rapid endocytosis; this interaction is abolished in the presence of LRPAP1/RAP. Also interacts with tPA/PLAT alone or in complex with SERPINE1. Interacts with the urokinase receptor PLAUR; this interaction leads to PLAUR internalization and is impaired in the presence of SORL1. Interacts with PDGFB. Interacts with TAU/MAPT, leading to endocytosis; this interaction is reduced in the presence of LRPAP1/RAP. Interacts with IGFBP3. Interacts with ADGRG6. In terms of processing, cleaved into a 85 kDa membrane-spanning subunit (LRP-85) and a 515 kDa large extracellular domain (LRP-515) that remains non-covalently associated. Gamma-secretase-dependent cleavage of LRP-85 releases the intracellular domain from the membrane. Phosphorylated on serine and threonine residues. Post-translationally, phosphorylated on tyrosine residues upon stimulation with PDGF. Tyrosine phosphorylation promotes interaction with SHC1.

The protein resides in the cell membrane. It is found in the membrane. The protein localises to the coated pit. Its subcellular location is the golgi outpost. It localises to the cytoplasm. The protein resides in the cytoskeleton. It is found in the microtubule organizing center. The protein localises to the nucleus. Its function is as follows. Endocytic receptor involved in endocytosis and in phagocytosis of apoptotic cells. Required for early embryonic development. Involved in cellular lipid homeostasis. Involved in the plasma clearance of chylomicron remnants and activated LRPAP1 (alpha 2-macroglobulin), as well as the local metabolism of complexes between plasminogen activators and their endogenous inhibitors. Acts as an LRPAP1 alpha-2-macroglobulin receptor. Acts as a TAU/MAPT receptor and controls the endocytosis of TAU/MAPT as well as its subsequent spread. May modulate cellular events, such as APP metabolism, kinase-dependent intracellular signaling, neuronal calcium signaling as well as neurotransmission. Also acts as a receptor for IGFBP3 to mediate cell growth inhibition. This is Prolow-density lipoprotein receptor-related protein 1 from Rattus norvegicus (Rat).